A 187-amino-acid chain; its full sequence is Interferon alpha-3 (187 aa).

An N-terminal signal peptide occupies residues 1-23; that stretch reads MALPCSFSVALVLLSCHSLCCLA. 2 disulfides stabilise this stretch: C24–C122 and C52–C160. Residues N94 and N101 are each glycosylated (N-linked (GlcNAc...) asparagine).

The protein belongs to the alpha/beta interferon family.

The protein localises to the secreted. In terms of biological role, produced by macrophages, IFN-alpha have antiviral activities. Interferon stimulates the production of two enzymes: a protein kinase and an oligoadenylate synthetase. The protein is Interferon alpha-3 of Canis lupus familiaris (Dog).